A 587-amino-acid chain; its full sequence is Cryptochrome-1 (587 aa).

The 130-residue stretch at 3–132 folds into the Photolyase/cryptochrome alpha/beta domain; sequence VNAVHWFRKG…EVIVRISHTL (130 aa). Lys-11 is covalently cross-linked (Glycyl lysine isopeptide (Lys-Gly) (interchain with G-Cter in ubiquitin)). The short motif at 50-54 is the LIR 1 element; it reads NRWRF. A Phosphoserine; by AMPK modification is found at Ser-71. An LIR 2 motif is present at residues 82–87; the sequence is DVFPRL. A Glycyl lysine isopeptide (Lys-Gly) (interchain with G-Cter in ubiquitin) cross-link involves residue Lys-107. The LIR 3 signature appears at 151 to 156; sequence KRFQTL. Lys-159 participates in a covalent cross-link: Glycyl lysine isopeptide (Lys-Gly) (interchain with G-Cter in ubiquitin). Ser-247 carries the post-translational modification Phosphoserine; by MAPK. Residue Ser-252 coordinates FAD. 2 short sequence motifs (LIR) span residues 255-260 and 271-276; these read LRFGCL and DLYKKV. Ser-280 is modified (phosphoserine; by AMPK). The LIR 6 signature appears at 285–290; sequence SLYGQL. Position 289 (Gln-289) interacts with FAD. Lys-329 is covalently cross-linked (Glycyl lysine isopeptide (Lys-Gly) (interchain with G-Cter in ubiquitin)). The short motif at 335 to 339 is the LIR 7 element; it reads TGFPW. His-355 serves as a coordination point for FAD. The interval 371 to 470 is required for inhibition of CLOCK-BMAL1-mediated transcription; the sequence is WISWEEGMKV…LIGVNYPKPM (100 aa). The LIR 8 motif lies at 379–384; the sequence is KVFEEL. Residue 387–389 participates in FAD binding; sequence DAD. 3 consecutive short sequence motifs (LIR) follow at residues 395-400, 411-416, and 430-435; these read GSWMWL, HCYCPV, and RRYLPV. The tract at residues 471–493 is interaction with TIMELESS; it reads VNHAEASRLNIERMKQIYQQLSR. Lys-485 participates in a covalent cross-link: Glycyl lysine isopeptide (Lys-Gly) (interchain with G-Cter in ubiquitin). 2 short sequence motifs (LIR) span residues 486-491 and 492-497; these read QIYQQL and SRYRGL. The disordered stretch occupies residues 554–587; sequence GSSSMGHGLSNGKRPSQEEDTQSIGPKVQRQSTN. Ser-569 carries the phosphoserine modification.

The protein belongs to the DNA photolyase class-1 family. As to quaternary structure, component of the circadian core oscillator, which includes the CRY proteins, CLOCK or NPAS2, BMAL1 or BMAL2, CSNK1D and/or CSNK1E, TIMELESS, and the PER proteins. Interacts directly with TIMELESS. Interacts directly with PER1, PER2 and PER3; interaction with PER2 inhibits its ubiquitination and vice versa. Interacts with FBXL21. Interacts with FBXL3. Interacts with CLOCK-BMAL1 independently of PER2 and DNA. Interacts with HDAC1, HDAC2 and SIN3B. Interacts with nuclear receptors AR, NR1D1, NR3C1/GR, RORA and RORC; the interaction with at least NR3C1/GR is ligand dependent. Interacts with PRKDC. Interacts with the G protein subunit alpha GNAS; the interaction may block GPCR-mediated regulation of cAMP concentrations. Interacts with PRMT5. Interacts with EZH2. Interacts with MYBBP1A, DOCK7, HNRNPU, RPL7A, RPL8 and RPS3. Interacts with PPP5C (via TPR repeats). Interacts with MAP1LC3B. Interacts with CLOCK. Interacts with BMAL1. Interacts weakly with HDAC3; this interaction is enhanced in the presence of FBXL3. Interacts with TRIM28, KCTD5 and DDB1 Interacts with HNF4A. Interacts with PSMD2 in a KDM8-dependent manner. Interacts with KDM8 in a FBXL3-dependent manner. Interacts with PPARG in a ligand-dependent manner. Interacts with PPARD (via domain NR LBD) and NR1I2 (via domain NR LBD) in a ligand-dependent manner. Interacts with PPARA, NR1I3 and VDR. It depends on FAD as a cofactor. Requires (6R)-5,10-methylene-5,6,7,8-tetrahydrofolate as cofactor. In terms of processing, phosphorylation on Ser-247 by MAPK is important for the inhibition of CLOCK-BMAL1-mediated transcriptional activity. Phosphorylation by CSNK1E requires interaction with PER1 or PER2. Phosphorylation at Ser-71 and Ser-280 by AMPK decreases protein stability. Phosphorylation at Ser-569 exhibits a robust circadian rhythm with a peak at CT8, increases protein stability, prevents SCF(FBXL3)-mediated degradation and is antagonized by interaction with PRKDC. Post-translationally, ubiquitinated by the SCF(FBXL3) and SCF(FBXL21) complexes, regulating the balance between degradation and stabilization. The SCF(FBXL3) complex is mainly nuclear and mediates ubiquitination and subsequent degradation of CRY1. In contrast, cytoplasmic SCF(FBXL21) complex-mediated ubiquitination leads to stabilize CRY1 and counteract the activity of the SCF(FBXL3) complex. The SCF(FBXL3) and SCF(FBXL21) complexes probably mediate ubiquitination at different Lys residues. Ubiquitination at Lys-11 and Lys-107 are specifically ubiquitinated by the SCF(FBXL21) complex but not by the SCF(FBXL3) complex. Ubiquitination may be inhibited by PER2. Deubiquitinated by USP7. Undergoes autophagy-mediated degradation in the liver in a time-dependent manner. Autophagic degradation of CRY1 (an inhibitor of gluconeogenesis) occurs during periods of reduced feeding allowing induction of gluconeogenesis and maintenance of blood glucose levels. Expressed in all tissues tested including spleen, liver, skeletal muscle, kidney, brain, intestine, eye, harderian gland, liver and heart. Highest levels in the eye, brain, kidney and harderian gland. In the brain, especially located to the suprachiasma nucleus (SCN).

Its subcellular location is the cytoplasm. It is found in the nucleus. Its function is as follows. Transcriptional repressor which forms a core component of the circadian clock. The circadian clock, an internal time-keeping system, regulates various physiological processes through the generation of approximately 24 hour circadian rhythms in gene expression, which are translated into rhythms in metabolism and behavior. It is derived from the Latin roots 'circa' (about) and 'diem' (day) and acts as an important regulator of a wide array of physiological functions including metabolism, sleep, body temperature, blood pressure, endocrine, immune, cardiovascular, and renal function. Consists of two major components: the central clock, residing in the suprachiasmatic nucleus (SCN) of the brain, and the peripheral clocks that are present in nearly every tissue and organ system. Both the central and peripheral clocks can be reset by environmental cues, also known as Zeitgebers (German for 'timegivers'). The predominant Zeitgeber for the central clock is light, which is sensed by retina and signals directly to the SCN. The central clock entrains the peripheral clocks through neuronal and hormonal signals, body temperature and feeding-related cues, aligning all clocks with the external light/dark cycle. Circadian rhythms allow an organism to achieve temporal homeostasis with its environment at the molecular level by regulating gene expression to create a peak of protein expression once every 24 hours to control when a particular physiological process is most active with respect to the solar day. Transcription and translation of core clock components (CLOCK, NPAS2, BMAL1, BMAL2, PER1, PER2, PER3, CRY1 and CRY2) plays a critical role in rhythm generation, whereas delays imposed by post-translational modifications (PTMs) are important for determining the period (tau) of the rhythms (tau refers to the period of a rhythm and is the length, in time, of one complete cycle). A diurnal rhythm is synchronized with the day/night cycle, while the ultradian and infradian rhythms have a period shorter and longer than 24 hours, respectively. Disruptions in the circadian rhythms contribute to the pathology of cardiovascular diseases, cancer, metabolic syndromes and aging. A transcription/translation feedback loop (TTFL) forms the core of the molecular circadian clock mechanism. Transcription factors, CLOCK or NPAS2 and BMAL1 or BMAL2, form the positive limb of the feedback loop, act in the form of a heterodimer and activate the transcription of core clock genes and clock-controlled genes (involved in key metabolic processes), harboring E-box elements (5'-CACGTG-3') within their promoters. The core clock genes: PER1/2/3 and CRY1/2 which are transcriptional repressors form the negative limb of the feedback loop and interact with the CLOCK|NPAS2-BMAL1|BMAL2 heterodimer inhibiting its activity and thereby negatively regulating their own expression. This heterodimer also activates nuclear receptors NR1D1/2 and RORA/B/G, which form a second feedback loop and which activate and repress BMAL1 transcription, respectively. CRY1 and CRY2 have redundant functions but also differential and selective contributions at least in defining the pace of the SCN circadian clock and its circadian transcriptional outputs. More potent transcriptional repressor in cerebellum and liver than CRY2, though more effective in lengthening the period of the SCN oscillator. On its side, CRY2 seems to play a critical role in tuning SCN circadian period by opposing the action of CRY1. With CRY2, is dispensable for circadian rhythm generation but necessary for the development of intercellular networks for rhythm synchrony. Capable of translocating circadian clock core proteins such as PER proteins to the nucleus. Interacts with CLOCK-BMAL1 independently of PER proteins and is found at CLOCK-BMAL1-bound sites, suggesting that CRY may act as a molecular gatekeeper to maintain CLOCK-BMAL1 in a poised and repressed state until the proper time for transcriptional activation. Represses the CLOCK-BMAL1 induced transcription of BHLHE40/DEC1, ATF4, MTA1, KLF10 and NAMPT. May repress circadian target genes expression in collaboration with HDAC1 and HDAC2 through histone deacetylation. Mediates the clock-control activation of ATR and modulates ATR-mediated DNA damage checkpoint. In liver, mediates circadian regulation of cAMP signaling and gluconeogenesis by binding to membrane-coupled G proteins and blocking glucagon-mediated increases in intracellular cAMP concentrations and CREB1 phosphorylation. Inhibits hepatic gluconeogenesis by decreasing nuclear FOXO1 levels that down-regulates gluconeogenic gene expression. Besides its role in the maintenance of the circadian clock, is also involved in the regulation of other processes. Represses glucocorticoid receptor NR3C1/GR-induced transcriptional activity by binding to glucocorticoid response elements (GREs). Plays a key role in glucose and lipid metabolism modulation, in part, through the transcriptional regulation of genes involved in these pathways, such as LEP or ACSL4. Represses PPARD and its target genes in the skeletal muscle and limits exercise capacity. Plays an essential role in the generation of circadian rhythms in the retina. Represses the transcriptional activity of NR1I2. The sequence is that of Cryptochrome-1 (CRY1) from Spalax judaei (Judean Mountains blind mole rat).